The following is a 236-amino-acid chain: 15,16-dihydrobiliverdin:ferredoxin oxidoreductase (236 aa).

It belongs to the HY2 family.

The catalysed reaction is 15,16-dihydrobiliverdin + oxidized 2[4Fe-4S]-[ferredoxin] = biliverdin IXalpha + reduced 2[4Fe-4S]-[ferredoxin] + 2 H(+). Functionally, catalyzes the two-electron reduction of biliverdin IX-alpha at the C15 methine bridge. This Prochlorococcus marinus (strain MIT 9312) protein is 15,16-dihydrobiliverdin:ferredoxin oxidoreductase.